Consider the following 387-residue polypeptide: Putative actin-29 (387 aa).

It belongs to the actin family.

Its subcellular location is the cytoplasm. The protein resides in the cytoskeleton. It carries out the reaction ATP + H2O = ADP + phosphate + H(+). Functionally, actins are highly conserved proteins that are involved in various types of cell motility and are ubiquitously expressed in all eukaryotic cells. Multiple isoforms are involved in various cellular functions such as cytoskeleton structure, cell mobility, chromosome movement and muscle contraction. The polypeptide is Putative actin-29 (act29) (Dictyostelium discoideum (Social amoeba)).